Reading from the N-terminus, the 415-residue chain is MAKKNPKILSIVLAGGEGTRLMPLTRDRAKPAVPFGGVYRLIDFPLSNLVNSGYSQVIVLTQYKSHSLDRHISQLWRFSTLLGNYVSPVPAQQRLGKHWYLGSADAVYQTINIIEDVQPDIVVIVGADHVYRMDFEQMVNQHIESGAEFTVAGIRQPIEQSSQFGVIEVDPEHPNMIKSFQEKPKETTGLPDNPNEILASMGNYVANTDALFNALSIDSKAENTKHDMGGDIAPFFAERNEAGVYDFSRNEIPGATTTDHAYWRDVGTIRQFYDAHMDLISYIPEFNLYNMEWPIYTSSGNLPPAKFVHAAGDRIGHATDSIVSPGVIVSGGEIHHSVISPNVRVHSWSQVNDSILFDNVEINRRARVNRAILDKNVVLTENSTVGLDVEHDLARGFTVTSDGITVVPKGTVVDD.

Alpha-D-glucose 1-phosphate-binding positions include tyrosine 100, glycine 165, 182-183 (EK), and serine 200.

This sequence belongs to the bacterial/plant glucose-1-phosphate adenylyltransferase family. Homotetramer.

It carries out the reaction alpha-D-glucose 1-phosphate + ATP + H(+) = ADP-alpha-D-glucose + diphosphate. The protein operates within glycan biosynthesis; glycogen biosynthesis. Involved in the biosynthesis of ADP-glucose, a building block required for the elongation reactions to produce glycogen. Catalyzes the reaction between ATP and alpha-D-glucose 1-phosphate (G1P) to produce pyrophosphate and ADP-Glc. This is Glucose-1-phosphate adenylyltransferase from Bifidobacterium animalis subsp. lactis (strain AD011).